Here is a 228-residue protein sequence, read N- to C-terminus: UPF0173 metal-dependent hydrolase Tpen_1493 (228 aa).

The protein belongs to the UPF0173 family.

The protein is UPF0173 metal-dependent hydrolase Tpen_1493 of Thermofilum pendens (strain DSM 2475 / Hrk 5).